The chain runs to 182 residues: NADH-quinone oxidoreductase subunit B (182 aa).

4 residues coordinate [4Fe-4S] cluster: C61, C62, C126, and C156.

The protein belongs to the complex I 20 kDa subunit family. As to quaternary structure, NDH-1 is composed of 14 different subunits. Subunits NuoB, C, D, E, F, and G constitute the peripheral sector of the complex. Requires [4Fe-4S] cluster as cofactor.

It is found in the cell inner membrane. It carries out the reaction a quinone + NADH + 5 H(+)(in) = a quinol + NAD(+) + 4 H(+)(out). Its function is as follows. NDH-1 shuttles electrons from NADH, via FMN and iron-sulfur (Fe-S) centers, to quinones in the respiratory chain. The immediate electron acceptor for the enzyme in this species is believed to be ubiquinone. Couples the redox reaction to proton translocation (for every two electrons transferred, four hydrogen ions are translocated across the cytoplasmic membrane), and thus conserves the redox energy in a proton gradient. The polypeptide is NADH-quinone oxidoreductase subunit B (Xanthomonas oryzae pv. oryzae (strain PXO99A)).